Consider the following 312-residue polypeptide: 4-diphosphocytidyl-2-C-methyl-D-erythritol kinase (312 aa).

The active site involves Lys18. 104–114 (PIAGGMGGGSA) is an ATP binding site. Residue Asp146 is part of the active site.

It belongs to the GHMP kinase family. IspE subfamily.

The enzyme catalyses 4-CDP-2-C-methyl-D-erythritol + ATP = 4-CDP-2-C-methyl-D-erythritol 2-phosphate + ADP + H(+). Its pathway is isoprenoid biosynthesis; isopentenyl diphosphate biosynthesis via DXP pathway; isopentenyl diphosphate from 1-deoxy-D-xylulose 5-phosphate: step 3/6. Its function is as follows. Catalyzes the phosphorylation of the position 2 hydroxy group of 4-diphosphocytidyl-2C-methyl-D-erythritol. The polypeptide is 4-diphosphocytidyl-2-C-methyl-D-erythritol kinase (Clavibacter michiganensis subsp. michiganensis (strain NCPPB 382)).